Consider the following 142-residue polypeptide: Large ribosomal subunit protein uL11 (142 aa).

This sequence belongs to the universal ribosomal protein uL11 family. In terms of assembly, part of the ribosomal stalk of the 50S ribosomal subunit. Interacts with L10 and the large rRNA to form the base of the stalk. L10 forms an elongated spine to which L12 dimers bind in a sequential fashion forming a multimeric L10(L12)X complex. Post-translationally, one or more lysine residues are methylated.

Forms part of the ribosomal stalk which helps the ribosome interact with GTP-bound translation factors. In Desulforudis audaxviator (strain MP104C), this protein is Large ribosomal subunit protein uL11.